The primary structure comprises 114 residues: Notch-regulated ankyrin repeat-containing protein (114 aa).

ANK repeat units follow at residues 50–79 and 83–112; these read EGQT…DIRL and DGWS…YAAS.

Belongs to the NRARP family. In terms of assembly, interacts with LEF1.

In terms of biological role, downstream effector of Notch signaling. Involved in the regulation of liver cancer cells self-renewal. Involved in angiogenesis acting downstream of Notch at branch points to regulate vascular density. Proposed to integrate endothelial Notch and Wnt signaling to control stalk cell proliferation and to stablilize new endothelial connections during angiogenesis. During somitogenesis involved in maintenance of proper somite segmentation and proper numbers of somites and vertebrae. Required for proper anterior-posterior somite patterning. Proposed to function in a negative feedback loop to destabilize Notch 1 intracellular domain (NICD) and down-regulate the Notch signal, preventing expansion of the Notch signal into the anterior somite domain. This is Notch-regulated ankyrin repeat-containing protein (NRARP) from Homo sapiens (Human).